The following is a 699-amino-acid chain: Methylcrotonoyl-CoA carboxylase subunit alpha, mitochondrial (699 aa).

The Biotin carboxylation domain maps to 30 to 475 (ITKILIANRG…ETGFIPIHRE (446 aa)). ATP-binding residues include lysine 144, glutamate 228, and histidine 263. Residues 148–345 (KDIMIKAGVP…LVEWQLKVAE (198 aa)) form the ATP-grasp domain. The active site involves arginine 320. The region spanning 624–699 (KGADGVLGSL…EDKKTLAVIV (76 aa)) is the Biotinyl-binding domain. Lysine 665 bears the N6-biotinyllysine mark.

In terms of assembly, probably a dodecamer composed of six biotin-containing alpha subunits and six beta subunits. Requires Mn(2+) as cofactor. Biotin is required as a cofactor.

The protein resides in the mitochondrion matrix. The catalysed reaction is 3-methylbut-2-enoyl-CoA + hydrogencarbonate + ATP = 3-methyl-(2E)-glutaconyl-CoA + ADP + phosphate + H(+). Its pathway is amino-acid degradation; L-leucine degradation; (S)-3-hydroxy-3-methylglutaryl-CoA from 3-isovaleryl-CoA: step 2/3. In terms of biological role, biotin-attachment subunit of the 3-methylcrotonyl-CoA carboxylase, an enzyme that catalyzes the conversion of 3-methylcrotonyl-CoA to 3-methylglutaconyl-CoA, a critical step for leucine and isovaleric acid catabolism. The polypeptide is Methylcrotonoyl-CoA carboxylase subunit alpha, mitochondrial (mccA) (Dictyostelium discoideum (Social amoeba)).